Reading from the N-terminus, the 98-residue chain is Co-chaperonin GroES (98 aa).

This sequence belongs to the GroES chaperonin family. Heptamer of 7 subunits arranged in a ring. Interacts with the chaperonin GroEL.

It is found in the cytoplasm. In terms of biological role, together with the chaperonin GroEL, plays an essential role in assisting protein folding. The GroEL-GroES system forms a nano-cage that allows encapsulation of the non-native substrate proteins and provides a physical environment optimized to promote and accelerate protein folding. GroES binds to the apical surface of the GroEL ring, thereby capping the opening of the GroEL channel. The chain is Co-chaperonin GroES from Brucella abortus (strain S19).